The following is a 254-amino-acid chain: UPF0246 protein CPR_2119 (254 aa).

Belongs to the UPF0246 family.

This is UPF0246 protein CPR_2119 from Clostridium perfringens (strain SM101 / Type A).